A 2212-amino-acid chain; its full sequence is MSIRKSTTSPVSGTDRADLNDSFAVSEAEPSQLHGHVEYGADVSVGVEDASGFTAEDAFQVGGEEDEEQVSTVTNGAVVPQSVVAAESADEDVLSRSTKKEEFLPESTSIAEPVKSDVITNVIDANADTGLDDDPWMKDGTPEFPPADENLPEVPPVAETKVETSKSIAKQQIYGEKVEDFTENSASPQEVDSKQTSSTIADFIPTPEHIHSNLHTSETENEPIKQSQLPWESHVEQIEALPWEEQPQKVEHVLPWEEKPDEVSQKDEALPWEERRVEHPEQAAESTLPWEEQPNVEEFQAHEPALPWEERPEVEESSLPWEEKVGESQGQEAALPWEEQQEVEVSSLLLEEKVRESSLPWEGEEGESQAQESKLPWEEQRIQSTPPSEEQVLEPVEGSSLPVEEKDSTEGSLPWNQHHEGEAQEILPWEQSTKPQDTQPQVSQEELHDYSVSNVISQSEIVEEQAQPVSQAYESQFLAGFFTERRPEQESETKQESLDELFEKDEDFLPELKQPVEQSTQTSKPKEFNLPELDLDDDLLLDDDLLDDDEPELVPEPVAPVEPIQEAIQNNVAKSPRQTYIPTQPHHNMYAPQISRTDTGEYVKKLEENKKRNDAYDFPDILMPPKVKPAPRHHQPTTKYSQPVASPNLSNIPSAPPATTIPPPVSIGIEASKKELPTTPQVAPGKPKSFFEELPVSMPKKAARAAPVKAVNQPHIQKSPQISNTPISASSKPAPVNPYMPSNTQKQNPHSPLQGSQYSFPRKTSSGLAPPPALNQYAPPSSNQYATVSAQVQPGLPQSSLPQSGMSQPGLQPFPQPQGHLVPPNLVAPQIQNSPLGQPQQTHNYAPPINTNVARAQGNLSATSPYVPNAGPYAPNNHNRSHSRASSLVGGGKGKEINPYAPALPPVSHSGTSPSIAQSSLTSRNRGISNPRNIYSKAQPAPKISNPNSLNQRQFPIFNWSNSQKVVTLIPNSSHNLYESHGESIRVRAAIDLLKDKEMYSTFPGPLSKSKTKRKDVEKWLESNIALLTTNSIENQDEYLLNQVLLEAVKFEGGFNSHEFIKAVCMVLNPTADYNTPGDISGMTSVSANAYKLDNAGIGIVFGLIQGGHIDKALEFTLSKGDWALALVVSNFAGHDRFAKVAADYARFSFPYQKSNNKIHHIIPILLKLAVGNVKSVIDDLNAVATEGEYASHHWREIVSSVIISGVSKSQDFLVEFGKFLGLHHNIAASEICYVIAGLPLSPQALQPSGIVVSVIGSLTGTSMYTEVYEYILKISTVFVQQGVGIIPHLLPLKLKHATVLADYGLFNESQKYIDSINNNMKTLGNRSPYLNAAFIHELQSLIVRLQELGSSESSWFSGKMSKVNLDNIWGQIDKFIGGEEPKSKSGENGVFSKFSPSVSRNTSTLDFTAMNVSSNKYPHSSPQMPSGQFGSSSIAPSTADGVSVPVTRAMPPLQSFNSTPAINTLSMNSKYSLPHLQQTKNASFSVHSQSTQVPPSHHSTPQQSHVHPNVPLHHAAESKYSPSNASPQVPDSTASPYVPPVKRTTPRVAAKAVNATGPYVYANPEGHVSNSSIGSHRQHGYHPPTSQTPTVNAKRHSVASVISNEATPNSEVIHSHHNHSPSIQSDISMDYPSEFKPPPAVKQIVDHKLVSALNDHAPDTIDESPEFKSEAIVEKVPPLSASQEVSGQPSAASTSVPSSEKAATVDDETTSSAASAPPPQSKASLKKPAKVNPYAPGANRSGTARKSKYGPPTGASSSKYSVPANLAQQDEPINDDTLKYGSMFDYSGYKTGEPTVADNDNVEPPTQSETTSKHAAEEDVTELIVEPKPSIPESPSAPKIVREPETSAPPHFKQPESHFAPFGYNTPLKARTKHYANIDDSFDNSEVSGDQDLTDIHTPRKRPLILNNGPPQLTGKESMFNPYQGDSGVNKFGLDFPIPGSPDYTTRANSVVDQPGYFSSRLSQSQQSALYQQYEVEDDTVRDYVPTVEEDDEEDEDEEDRDKKRLQEEEEKRAKAASEEAKKKASEAAAKRDPGRGWFNWSGKNDGKPKPIKAKLGNPSTFYYDEKHKRWLDKSRPIEEQLQAAAPPPPPAMKKKAPAASSNITASSGPPSAGPPPGINPSGVAPTAAPSGPPSAPSGVTSGPPSIGTGPSNGAGGPPFAKATSVQSSAPSLANAGLDDLLSMGGSSVAGGTRKAKRNTRRGHINVFDKK.

2 stretches are compositionally biased toward polar residues: residues 1 to 12 and 183 to 200; these read MSIRKSTTSPVS and ENSA…SSTI. Disordered regions lie at residues 1-31, 173-343, 355-451, 480-563, 626-666, 705-849, 861-948, 1380-1400, 1416-1446, 1484-1542, 1572-1593, 1680-1866, 1883-1927, and 1960-2212; these read MSIR…AEPS, IYGE…QQEV, RESS…HDYS, GFFT…PVEP, KVKP…PPVS, AAPV…APPI, SATS…SNPN, EEPK…PSVS, NKYP…VSVP, SFSV…VPPV, SSIG…PTVN, LSAS…FGYN, FDNS…YQGD, and SSRL…FDKK. Positions 246–282 are enriched in basic and acidic residues; sequence QPQKVEHVLPWEEKPDEVSQKDEALPWEERRVEHPEQ. Polar residues predominate over residues 430 to 444; that stretch reads EQSTKPQDTQPQVSQ. Basic and acidic residues predominate over residues 483-497; the sequence is TERRPEQESETKQES. 2 stretches are compositionally biased toward acidic residues: residues 498 to 509 and 533 to 553; these read LDELFEKDEDFL and LDLD…EPEL. Polar residues predominate over residues 637-651; it reads TTKYSQPVASPNLSN. Pro residues predominate over residues 654-665; the sequence is SAPPATTIPPPV. Composition is skewed to polar residues over residues 714–731, 740–767, and 778–807; these read PHIQ…SASS, MPSN…TSSG, and APPS…SGMS. Residues 808–819 are compositionally biased toward low complexity; that stretch reads QPGLQPFPQPQG. 2 stretches are compositionally biased toward polar residues: residues 830–849 and 909–933; these read QIQN…APPI and HSGT…NPRN. Polar residues-rich tracts occupy residues 1416–1437, 1484–1507, and 1521–1536; these read NKYP…SIAP, SFSV…QSHV, and YSPS…STAS. The span at 1681-1699 shows a compositional bias: polar residues; sequence SASQEVSGQPSAASTSVPS. A compositionally biased stretch (low complexity) spans 1960–1975; sequence SSRLSQSQQSALYQQY. Over residues 1989 to 2001 the composition is skewed to acidic residues; it reads VEEDDEEDEDEED. Composition is skewed to basic and acidic residues over residues 2002–2036 and 2065–2080; these read RDKK…RDPG and YDEK…RPIE. Low complexity-rich tracts occupy residues 2121-2131 and 2138-2147; these read NPSGVAPTAAP and PSGVTSGPPS. Over residues 2195–2205 the composition is skewed to basic residues; sequence RKAKRNTRRGH.

The protein belongs to the SEC16 family.

It localises to the endoplasmic reticulum membrane. Its function is as follows. Involved in the initiation of assembly of the COPII coat required for the formation of transport vesicles from the endoplasmic reticulum (ER) and the selection of cargo molecules. Also involved in autophagy. The chain is COPII coat assembly protein SEC16 (SEC16) from Scheffersomyces stipitis (strain ATCC 58785 / CBS 6054 / NBRC 10063 / NRRL Y-11545) (Yeast).